A 132-amino-acid chain; its full sequence is Small ribosomal subunit protein uS8 (132 aa).

It belongs to the universal ribosomal protein uS8 family. Part of the 30S ribosomal subunit. Contacts proteins S5 and S12.

One of the primary rRNA binding proteins, it binds directly to 16S rRNA central domain where it helps coordinate assembly of the platform of the 30S subunit. The sequence is that of Small ribosomal subunit protein uS8 from Exiguobacterium sp. (strain ATCC BAA-1283 / AT1b).